A 419-amino-acid chain; its full sequence is Serine hydroxymethyltransferase (419 aa).

(6S)-5,6,7,8-tetrahydrofolate contacts are provided by residues L121 and 125 to 127 (GHL). K230 bears the N6-(pyridoxal phosphate)lysine mark. Residue 355 to 357 (SPF) participates in (6S)-5,6,7,8-tetrahydrofolate binding.

It belongs to the SHMT family. Homodimer. Requires pyridoxal 5'-phosphate as cofactor.

The protein localises to the cytoplasm. It carries out the reaction (6R)-5,10-methylene-5,6,7,8-tetrahydrofolate + glycine + H2O = (6S)-5,6,7,8-tetrahydrofolate + L-serine. It participates in one-carbon metabolism; tetrahydrofolate interconversion. The protein operates within amino-acid biosynthesis; glycine biosynthesis; glycine from L-serine: step 1/1. Functionally, catalyzes the reversible interconversion of serine and glycine with tetrahydrofolate (THF) serving as the one-carbon carrier. This reaction serves as the major source of one-carbon groups required for the biosynthesis of purines, thymidylate, methionine, and other important biomolecules. Also exhibits THF-independent aldolase activity toward beta-hydroxyamino acids, producing glycine and aldehydes, via a retro-aldol mechanism. The protein is Serine hydroxymethyltransferase of Streptococcus equi subsp. zooepidemicus (strain H70).